We begin with the raw amino-acid sequence, 256 residues long: 5'-nucleotidase SurE (256 aa).

A divalent metal cation contacts are provided by D8, D9, S39, and N95.

It belongs to the SurE nucleotidase family. It depends on a divalent metal cation as a cofactor.

Its subcellular location is the cytoplasm. The enzyme catalyses a ribonucleoside 5'-phosphate + H2O = a ribonucleoside + phosphate. In terms of biological role, nucleotidase that shows phosphatase activity on nucleoside 5'-monophosphates. The chain is 5'-nucleotidase SurE from Methanosphaera stadtmanae (strain ATCC 43021 / DSM 3091 / JCM 11832 / MCB-3).